A 90-amino-acid polypeptide reads, in one-letter code: Small ribosomal subunit protein uS15c (90 aa).

This sequence belongs to the universal ribosomal protein uS15 family. In terms of assembly, part of the 30S ribosomal subunit.

The protein resides in the plastid. The protein localises to the chloroplast. The polypeptide is Small ribosomal subunit protein uS15c (rps15) (Lotus japonicus (Lotus corniculatus var. japonicus)).